The primary structure comprises 309 residues: MKTRSKLAAGFLTLMSVATLAACSGKTSNGTNVVTMKGDTITVSDFYDQVKTSKAAQQSMLTLILSRVFDTQYGDKVSDKKVSEAYNKTAKGYGNSFSSALSQAGLTPEGYKQQIRTTMLVEYAVKEAAKKELTEANYKEAYKNYTPETSVQVIKLDAEDKAKSVLKDVKADGADFAKIAKEKTTATDKKVEYKFDSAGTSLPKEVMSAAFKLDKNGVSDVVSTVDSTTYKTSYYIIKVTDKTEKKSDWKSYKNRLKEVILKDKTSDRAFQNKVISKALEKANVKIKDKAFAGILSQYATTSGSSSLKK.

An N-terminal signal peptide occupies residues 1–22 (MKTRSKLAAGFLTLMSVATLAA). Residue Cys-23 is the site of N-palmitoyl cysteine attachment. The S-diacylglycerol cysteine moiety is linked to residue Cys-23. The 96-residue stretch at 146 to 241 (TPETSVQVIK…TSYYIIKVTD (96 aa)) folds into the PpiC domain.

Belongs to the PrsA family.

The protein resides in the cell membrane. The enzyme catalyses [protein]-peptidylproline (omega=180) = [protein]-peptidylproline (omega=0). Its function is as follows. Plays a major role in protein secretion by helping the post-translocational extracellular folding of several secreted proteins. In Streptococcus agalactiae serotype Ia (strain ATCC 27591 / A909 / CDC SS700), this protein is Foldase protein PrsA.